A 460-amino-acid polypeptide reads, in one-letter code: Probable fibrosin-1 (460 aa).

Lysine 8 is covalently cross-linked (Glycyl lysine isopeptide (Lys-Gly) (interchain with G-Cter in SUMO2)). 3 disordered regions span residues 40–79 (SLQGAFQPKSTNPELPPRLGPVPSGLSQKGTQIPDHFRPP), 205–311 (FAQK…KEEA), and 406–460 (YSRL…RADR). A compositionally biased stretch (pro residues) spans 212–223 (GAPPAFASPPDP). Asymmetric dimethylarginine is present on residues arginine 229 and arginine 239. Residues 248–272 (GSDKERPVERREPSITKEEKDRDLP) show a composition bias toward basic and acidic residues. Residue serine 281 is modified to Phosphoserine. The segment covering 288–311 (RAGEEGPRPTKESVRVKEERKEEA) has biased composition (basic and acidic residues). Pro residues predominate over residues 436 to 453 (APPPLVPAPRPSSPPRGP).

The chain is Probable fibrosin-1 (FBRS) from Homo sapiens (Human).